We begin with the raw amino-acid sequence, 257 residues long: Hydroxyethylthiazole kinase (257 aa).

Substrate is bound at residue methionine 49. Residues arginine 124 and threonine 170 each coordinate ATP. Glycine 197 provides a ligand contact to substrate.

This sequence belongs to the Thz kinase family. Mg(2+) is required as a cofactor.

The catalysed reaction is 5-(2-hydroxyethyl)-4-methylthiazole + ATP = 4-methyl-5-(2-phosphooxyethyl)-thiazole + ADP + H(+). It participates in cofactor biosynthesis; thiamine diphosphate biosynthesis; 4-methyl-5-(2-phosphoethyl)-thiazole from 5-(2-hydroxyethyl)-4-methylthiazole: step 1/1. In terms of biological role, catalyzes the phosphorylation of the hydroxyl group of 4-methyl-5-beta-hydroxyethylthiazole (THZ). The polypeptide is Hydroxyethylthiazole kinase (Klebsiella pneumoniae subsp. pneumoniae (strain ATCC 700721 / MGH 78578)).